The following is a 782-amino-acid chain: Endonuclease MutS2 (782 aa).

336–343 (GPNTGGKT) serves as a coordination point for ATP. The region spanning 707–782 (LDLRGYRYEE…GFGVTVAELK (76 aa)) is the Smr domain.

It belongs to the DNA mismatch repair MutS family. MutS2 subfamily. As to quaternary structure, homodimer. Binds to stalled ribosomes, contacting rRNA.

In terms of biological role, endonuclease that is involved in the suppression of homologous recombination and thus may have a key role in the control of bacterial genetic diversity. Its function is as follows. Acts as a ribosome collision sensor, splitting the ribosome into its 2 subunits. Detects stalled/collided 70S ribosomes which it binds and splits by an ATP-hydrolysis driven conformational change. Acts upstream of the ribosome quality control system (RQC), a ribosome-associated complex that mediates the extraction of incompletely synthesized nascent chains from stalled ribosomes and their subsequent degradation. Probably generates substrates for RQC. In Staphylococcus epidermidis (strain ATCC 12228 / FDA PCI 1200), this protein is Endonuclease MutS2.